Reading from the N-terminus, the 349-residue chain is 4-hydroxythreonine-4-phosphate dehydrogenase (349 aa).

Substrate contacts are provided by His-141 and Thr-142. Residues His-176, His-221, and His-276 each contribute to the a divalent metal cation site. Residues Lys-284, Asn-293, and Arg-302 each coordinate substrate.

It belongs to the PdxA family. In terms of assembly, homodimer. It depends on Zn(2+) as a cofactor. Mg(2+) is required as a cofactor. Requires Co(2+) as cofactor.

Its subcellular location is the cytoplasm. It catalyses the reaction 4-(phosphooxy)-L-threonine + NAD(+) = 3-amino-2-oxopropyl phosphate + CO2 + NADH. Its pathway is cofactor biosynthesis; pyridoxine 5'-phosphate biosynthesis; pyridoxine 5'-phosphate from D-erythrose 4-phosphate: step 4/5. Its function is as follows. Catalyzes the NAD(P)-dependent oxidation of 4-(phosphooxy)-L-threonine (HTP) into 2-amino-3-oxo-4-(phosphooxy)butyric acid which spontaneously decarboxylates to form 3-amino-2-oxopropyl phosphate (AHAP). The polypeptide is 4-hydroxythreonine-4-phosphate dehydrogenase (Methylorubrum extorquens (strain CM4 / NCIMB 13688) (Methylobacterium extorquens)).